A 361-amino-acid chain; its full sequence is Transmembrane protein 116 (361 aa).

The next 7 membrane-spanning stretches (helical) occupy residues 29–49 (WIQM…ILYA), 64–84 (FLLS…GLLF), 103–123 (TLYM…YTGL), 147–167 (LGPV…FVAG), 210–230 (CMAI…IFMG), 261–281 (MVLY…LATM), and 295–315 (VALY…NCLV).

Its subcellular location is the membrane. In Danio rerio (Zebrafish), this protein is Transmembrane protein 116 (tmem116).